Here is a 625-residue protein sequence, read N- to C-terminus: FMRFamide-activated amiloride-sensitive sodium channel (625 aa).

The Cytoplasmic segment spans residues 1 to 67 (MKYTSAATKP…IVTSRDTKRK (67 aa)). A helical membrane pass occupies residues 68–89 (VIWALLVIAGFTAATLQLSLLV). Residues 90 to 536 (RKYLQFQVVE…LADLFADIGG (447 aa)) lie on the Extracellular side of the membrane. Residues N134, N196, N303, N349, N365, N372, and N473 are each glycosylated (N-linked (GlcNAc...) asparagine). A helical membrane pass occupies residues 537–557 (TLGLWMGISVLTIMELIELVI). Topologically, residues 558 to 625 (RLTGLVFNSE…DFRRGVESPV (68 aa)) are cytoplasmic. The disordered stretch occupies residues 570–591 (LPRGPTTVNNNNGSNNHSQSTS). Residues 575–591 (TTVNNNNGSNNHSQSTS) are compositionally biased toward low complexity.

The protein belongs to the amiloride-sensitive sodium channel (TC 1.A.6) family. As to expression, muscle and nervous tissue.

The protein localises to the membrane. In terms of biological role, FMRFamide-gated ionotropic receptor. This chain is FMRFamide-activated amiloride-sensitive sodium channel, found in Cornu aspersum (Brown garden snail).